The sequence spans 215 residues: UPF0502 protein YceH (215 aa).

Position 80 is an N6-acetyllysine (lysine 80).

It belongs to the UPF0502 family.

This is UPF0502 protein YceH from Escherichia coli O7:K1 (strain IAI39 / ExPEC).